A 501-amino-acid polypeptide reads, in one-letter code: ATP synthase subunit alpha (501 aa).

Residue 169–176 (GDRQTGKT) participates in ATP binding.

It belongs to the ATPase alpha/beta chains family. As to quaternary structure, F-type ATPases have 2 components, CF(1) - the catalytic core - and CF(0) - the membrane proton channel. CF(1) has five subunits: alpha(3), beta(3), gamma(1), delta(1), epsilon(1). CF(0) has three main subunits: a(1), b(2) and c(9-12). The alpha and beta chains form an alternating ring which encloses part of the gamma chain. CF(1) is attached to CF(0) by a central stalk formed by the gamma and epsilon chains, while a peripheral stalk is formed by the delta and b chains.

Its subcellular location is the cell membrane. It catalyses the reaction ATP + H2O + 4 H(+)(in) = ADP + phosphate + 5 H(+)(out). Its function is as follows. Produces ATP from ADP in the presence of a proton gradient across the membrane. The alpha chain is a regulatory subunit. In Streptococcus pneumoniae serotype 2 (strain D39 / NCTC 7466), this protein is ATP synthase subunit alpha.